The sequence spans 223 residues: Endonuclease V (223 aa).

Mg(2+) is bound by residues aspartate 35 and aspartate 103.

Belongs to the endonuclease V family. Mg(2+) serves as cofactor.

The protein localises to the cytoplasm. The enzyme catalyses Endonucleolytic cleavage at apurinic or apyrimidinic sites to products with a 5'-phosphate.. In terms of biological role, DNA repair enzyme involved in the repair of deaminated bases. Selectively cleaves double-stranded DNA at the second phosphodiester bond 3' to a deoxyinosine leaving behind the intact lesion on the nicked DNA. The polypeptide is Endonuclease V (Shigella flexneri serotype 5b (strain 8401)).